A 448-amino-acid chain; its full sequence is tRNA-2-methylthio-N(6)-dimethylallyladenosine synthase (448 aa).

The MTTase N-terminal domain maps to 7-123 (RSFYIHTFGC…LPALIGDAEE (117 aa)). The [4Fe-4S] cluster site is built by Cys-16, Cys-52, Cys-86, Cys-159, Cys-163, and Cys-166. The Radical SAM core domain maps to 145–375 (REVGVGAFVP…IDLQLSISAE (231 aa)). Residues 378–441 (QEAVGSVVDV…SATLTGVNQG (64 aa)) enclose the TRAM domain.

Belongs to the methylthiotransferase family. MiaB subfamily. As to quaternary structure, monomer. [4Fe-4S] cluster is required as a cofactor.

It is found in the cytoplasm. It catalyses the reaction N(6)-dimethylallyladenosine(37) in tRNA + (sulfur carrier)-SH + AH2 + 2 S-adenosyl-L-methionine = 2-methylsulfanyl-N(6)-dimethylallyladenosine(37) in tRNA + (sulfur carrier)-H + 5'-deoxyadenosine + L-methionine + A + S-adenosyl-L-homocysteine + 2 H(+). In terms of biological role, catalyzes the methylthiolation of N6-(dimethylallyl)adenosine (i(6)A), leading to the formation of 2-methylthio-N6-(dimethylallyl)adenosine (ms(2)i(6)A) at position 37 in tRNAs that read codons beginning with uridine. The sequence is that of tRNA-2-methylthio-N(6)-dimethylallyladenosine synthase from Chlorobium phaeovibrioides (strain DSM 265 / 1930) (Prosthecochloris vibrioformis (strain DSM 265)).